The sequence spans 299 residues: ATP phosphoribosyltransferase (299 aa).

The protein belongs to the ATP phosphoribosyltransferase family. Long subfamily. Mg(2+) is required as a cofactor.

The protein localises to the cytoplasm. The catalysed reaction is 1-(5-phospho-beta-D-ribosyl)-ATP + diphosphate = 5-phospho-alpha-D-ribose 1-diphosphate + ATP. Its pathway is amino-acid biosynthesis; L-histidine biosynthesis; L-histidine from 5-phospho-alpha-D-ribose 1-diphosphate: step 1/9. Feedback inhibited by histidine. Functionally, catalyzes the condensation of ATP and 5-phosphoribose 1-diphosphate to form N'-(5'-phosphoribosyl)-ATP (PR-ATP). Has a crucial role in the pathway because the rate of histidine biosynthesis seems to be controlled primarily by regulation of HisG enzymatic activity. The polypeptide is ATP phosphoribosyltransferase (Campylobacter jejuni subsp. jejuni serotype O:6 (strain 81116 / NCTC 11828)).